Consider the following 287-residue polypeptide: Glutamate racemase (287 aa).

Residues 1 to 15 are compositionally biased toward polar residues; sequence MATKPQDANTTSREA. The interval 1–25 is disordered; sequence MATKPQDANTTSREAITSKADSPPR. Substrate is bound by residues 32 to 33 and 64 to 65; these read DS and YG. Residue Cys-96 is the Proton donor/acceptor of the active site. 97-98 contributes to the substrate binding site; the sequence is NT. Residue Cys-208 is the Proton donor/acceptor of the active site. 209–210 is a substrate binding site; that stretch reads TH.

It belongs to the aspartate/glutamate racemases family.

The enzyme catalyses L-glutamate = D-glutamate. The protein operates within cell wall biogenesis; peptidoglycan biosynthesis. Functionally, provides the (R)-glutamate required for cell wall biosynthesis. This chain is Glutamate racemase, found in Yersinia pseudotuberculosis serotype I (strain IP32953).